The primary structure comprises 137 residues: MAKKTQKRMPRRREEFTYRGYSVADLQQMALSELLPLMPARARRKFDRGLSREHEKLLADLRSGDENIRTHLRDMIIMPEMVGRSIEIHNGKEFQKVEIQPEAVFHYLGEFALTRRRVAHGSAGIGATRSSKYVPLK.

This sequence belongs to the universal ribosomal protein uS19 family.

Its function is as follows. Protein S19 forms a complex with S13 that binds strongly to the 16S ribosomal RNA. The chain is Small ribosomal subunit protein uS19 from Methanoculleus marisnigri (strain ATCC 35101 / DSM 1498 / JR1).